The primary structure comprises 278 residues: Orotidine 5'-phosphate decarboxylase (278 aa).

The active-site Proton donor is K95.

This sequence belongs to the OMP decarboxylase family. Type 2 subfamily.

It carries out the reaction orotidine 5'-phosphate + H(+) = UMP + CO2. The protein operates within pyrimidine metabolism; UMP biosynthesis via de novo pathway; UMP from orotate: step 2/2. This is Orotidine 5'-phosphate decarboxylase from Mycobacterium marinum (strain ATCC BAA-535 / M).